A 296-amino-acid chain; its full sequence is Ribonuclease HIII (296 aa).

The 216-residue stretch at 81–296 folds into the RNase H type-2 domain; the sequence is QAMIGTDEVG…TQKAKQLLER (216 aa). 3 residues coordinate a divalent metal cation: Asp-87, Glu-88, and Asp-190.

This sequence belongs to the RNase HII family. RnhC subfamily. Requires Mn(2+) as cofactor. The cofactor is Mg(2+).

The protein localises to the cytoplasm. It carries out the reaction Endonucleolytic cleavage to 5'-phosphomonoester.. In terms of biological role, endonuclease that specifically degrades the RNA of RNA-DNA hybrids. This is Ribonuclease HIII from Streptococcus gordonii (strain Challis / ATCC 35105 / BCRC 15272 / CH1 / DL1 / V288).